The sequence spans 207 residues: LexA repressor (207 aa).

The segment at residues 28 to 48 (RAEISRELGFKSANAAEEHLK) is a DNA-binding region (H-T-H motif). Catalysis depends on for autocatalytic cleavage activity residues Ser123 and Lys160.

This sequence belongs to the peptidase S24 family. As to quaternary structure, homodimer.

It catalyses the reaction Hydrolysis of Ala-|-Gly bond in repressor LexA.. In terms of biological role, represses a number of genes involved in the response to DNA damage (SOS response), including recA and lexA. In the presence of single-stranded DNA, RecA interacts with LexA causing an autocatalytic cleavage which disrupts the DNA-binding part of LexA, leading to derepression of the SOS regulon and eventually DNA repair. The polypeptide is LexA repressor (Haemophilus influenzae (strain ATCC 51907 / DSM 11121 / KW20 / Rd)).